The sequence spans 334 residues: Glyceraldehyde-3-phosphate dehydrogenase (334 aa).

NAD(+) contacts are provided by residues 11-12 (RI), aspartate 33, and serine 119. D-glyceraldehyde 3-phosphate-binding positions include 149–151 (SCT) and threonine 180. Cysteine 150 serves as the catalytic Nucleophile. Asparagine 181 is a binding site for NAD(+). Residues arginine 197, 210 to 211 (TG), and arginine 233 each bind D-glyceraldehyde 3-phosphate. Residue asparagine 314 participates in NAD(+) binding.

The protein belongs to the glyceraldehyde-3-phosphate dehydrogenase family. As to quaternary structure, homotetramer.

The protein localises to the cytoplasm. The catalysed reaction is D-glyceraldehyde 3-phosphate + phosphate + NAD(+) = (2R)-3-phospho-glyceroyl phosphate + NADH + H(+). It participates in carbohydrate degradation; glycolysis; pyruvate from D-glyceraldehyde 3-phosphate: step 1/5. In terms of biological role, catalyzes the oxidative phosphorylation of glyceraldehyde 3-phosphate (G3P) to 1,3-bisphosphoglycerate (BPG) using the cofactor NAD. The first reaction step involves the formation of a hemiacetal intermediate between G3P and a cysteine residue, and this hemiacetal intermediate is then oxidized to a thioester, with concomitant reduction of NAD to NADH. The reduced NADH is then exchanged with the second NAD, and the thioester is attacked by a nucleophilic inorganic phosphate to produce BPG. The polypeptide is Glyceraldehyde-3-phosphate dehydrogenase (gap) (Clostridium acetobutylicum (strain ATCC 824 / DSM 792 / JCM 1419 / IAM 19013 / LMG 5710 / NBRC 13948 / NRRL B-527 / VKM B-1787 / 2291 / W)).